We begin with the raw amino-acid sequence, 81 residues long: Sulfur carrier protein TusA (81 aa).

Catalysis depends on Cys-19, which acts as the Cysteine persulfide intermediate.

This sequence belongs to the sulfur carrier protein TusA family. Interacts with IscS.

It localises to the cytoplasm. The protein operates within tRNA modification. Functionally, sulfur carrier protein involved in sulfur trafficking in the cell. Part of a sulfur-relay system required for 2-thiolation during synthesis of 2-thiouridine of the modified wobble base 5-methylaminomethyl-2-thiouridine (mnm(5)s(2)U) in tRNA. Interacts with IscS and stimulates its cysteine desulfurase activity. Accepts an activated sulfur from IscS, which is then transferred to TusD, and thus determines the direction of sulfur flow from IscS to 2-thiouridine formation. Also appears to be involved in sulfur transfer for the biosynthesis of molybdopterin. This is Sulfur carrier protein TusA from Escherichia coli (strain SMS-3-5 / SECEC).